We begin with the raw amino-acid sequence, 194 residues long: Protein A43 (194 aa).

Residues 1-22 (MMMMKWIISILTMSIMPVLAYS) form the signal peptide. At 23–165 (SSIFRFHSED…YKDINDKYND (143 aa)) the chain is on the extracellular side. N-linked (GlcNAc...) asparagine; by host glycans are attached at residues Asn-65 and Asn-114. A helical transmembrane segment spans residues 166–186 (IYDFTAICMLIASTLIVTIYV). Over 187 to 194 (FKKIKMNS) the chain is Cytoplasmic.

The protein belongs to the orthopoxvirus OPG172 protein family.

The protein resides in the host membrane. Its subcellular location is the host cell surface. The polypeptide is Protein A43 (OPG172) (Homo sapiens (Human)).